The primary structure comprises 439 residues: Nitroalkane oxidase (439 aa).

FAD-binding positions include Leu131–Ser134, Thr139–Asn141, Trp169–Ser171, Arg304, His313–Gln314, Lys375–Met379, and Leu400–Gly404. Asp402 functions as the Proton acceptor in the catalytic mechanism.

It belongs to the acyl-CoA dehydrogenase family. Homotetramer. Requires FAD as cofactor.

It carries out the reaction a primary nitroalkane + O2 + H2O = an aldehyde + nitrite + H2O2 + H(+). It catalyses the reaction a secondary nitroalkane + O2 + H2O = a ketone + nitrite + H2O2 + H(+). Strongly inhibited by mercury chloride and KCN. Catalyzes the oxidative denitrification of neutral nitroalkanes, including 3-nitro-2-pentanol, 1-nitropropane, 2-nitropropane, nitroethane and nitrocyclohexane, and may thereby protect the organism against toxic compounds. Has no detectable acyl-CoA dehydrogenase activity. The polypeptide is Nitroalkane oxidase (Fusarium oxysporum (Fusarium vascular wilt)).